The sequence spans 161 residues: SsrA-binding protein (161 aa).

The interval 138-161 (DKRTDSKEKDWNRDKARIMKSSLR) is disordered. Basic and acidic residues predominate over residues 139-154 (KRTDSKEKDWNRDKAR).

It belongs to the SmpB family.

Its subcellular location is the cytoplasm. Its function is as follows. Required for rescue of stalled ribosomes mediated by trans-translation. Binds to transfer-messenger RNA (tmRNA), required for stable association of tmRNA with ribosomes. tmRNA and SmpB together mimic tRNA shape, replacing the anticodon stem-loop with SmpB. tmRNA is encoded by the ssrA gene; the 2 termini fold to resemble tRNA(Ala) and it encodes a 'tag peptide', a short internal open reading frame. During trans-translation Ala-aminoacylated tmRNA acts like a tRNA, entering the A-site of stalled ribosomes, displacing the stalled mRNA. The ribosome then switches to translate the ORF on the tmRNA; the nascent peptide is terminated with the 'tag peptide' encoded by the tmRNA and targeted for degradation. The ribosome is freed to recommence translation, which seems to be the essential function of trans-translation. The sequence is that of SsrA-binding protein from Aliivibrio fischeri (strain MJ11) (Vibrio fischeri).